Reading from the N-terminus, the 128-residue chain is Ferric uptake regulation protein homolog (128 aa).

Belongs to the Fur family.

This is Ferric uptake regulation protein homolog from Archaeoglobus fulgidus (strain ATCC 49558 / DSM 4304 / JCM 9628 / NBRC 100126 / VC-16).